The following is a 200-amino-acid chain: Probable molybdenum cofactor guanylyltransferase (200 aa).

Residues 8–10 (LAG), lysine 20, aspartate 66, and aspartate 97 each bind GTP. Aspartate 97 serves as a coordination point for Mg(2+).

Belongs to the MobA family. Mg(2+) serves as cofactor.

It is found in the cytoplasm. The catalysed reaction is Mo-molybdopterin + GTP + H(+) = Mo-molybdopterin guanine dinucleotide + diphosphate. Transfers a GMP moiety from GTP to Mo-molybdopterin (Mo-MPT) cofactor (Moco or molybdenum cofactor) to form Mo-molybdopterin guanine dinucleotide (Mo-MGD) cofactor. The sequence is that of Probable molybdenum cofactor guanylyltransferase from Bacillus velezensis (strain DSM 23117 / BGSC 10A6 / LMG 26770 / FZB42) (Bacillus amyloliquefaciens subsp. plantarum).